The primary structure comprises 658 residues: Alkyldihydroxyacetonephosphate synthase, peroxisomal (658 aa).

Disordered stretches follow at residues M1 to L41 and A63 to K86. The N-terminal 58 residues, M1–C58, are a transit peptide targeting the peroxisome. Over residues A23–G35 the composition is skewed to basic and acidic residues. The span at A63–A77 shows a compositional bias: low complexity. Residue S65 is modified to Phosphoserine. T74 bears the Phosphothreonine mark. K102 is modified (N6-acetyllysine). The region spanning F202–V384 is the FAD-binding PCMH-type domain. Residues P234–S240, D303–T309, and T316–S319 each bind FAD. K347 bears the N6-acetyllysine mark. E368–I374 is a binding site for FAD. Residue R515 coordinates substrate. Catalysis depends on Y578, which acts as the Proton donor/acceptor. Important for enzyme activity regions lie at residues H615 to H617 and N654 to L658.

The protein belongs to the FAD-binding oxidoreductase/transferase type 4 family. In terms of assembly, homodimer. The cofactor is FAD.

It localises to the peroxisome membrane. It is found in the peroxisome. The enzyme catalyses a long chain fatty alcohol + a 1-acylglycerone 3-phosphate = a 1-O-alkylglycerone 3-phosphate + a long-chain fatty acid + H(+). It catalyses the reaction hexadecan-1-ol + 1-hexadecanoylglycerone 3-phosphate = 1-O-hexadecylglycerone 3-phosphate + hexadecanoate + H(+). The catalysed reaction is 1-hexadecanoylglycerone 3-phosphate + a long-chain fatty acid = a 1-acylglycerone 3-phosphate + hexadecanoate. It functions in the pathway glycerolipid metabolism; ether lipid biosynthesis. Catalyzes the exchange of the acyl chain in acyl-dihydroxyacetonephosphate (acyl-DHAP) for a long chain fatty alcohol, yielding the first ether linked intermediate, i.e. alkyl-dihydroxyacetonephosphate (alkyl-DHAP), in the pathway of ether lipid biosynthesis. The chain is Alkyldihydroxyacetonephosphate synthase, peroxisomal (AGPS) from Homo sapiens (Human).